The following is a 130-amino-acid chain: Glycine cleavage system H protein (130 aa).

The 83-residue stretch at 24–106 folds into the Lipoyl-binding domain; sequence TVTIGITDHA…YDDGWFFKVK (83 aa). Lys65 bears the N6-lipoyllysine mark.

The protein belongs to the GcvH family. As to quaternary structure, the glycine cleavage system is composed of four proteins: P, T, L and H. The cofactor is (R)-lipoate.

Its function is as follows. The glycine cleavage system catalyzes the degradation of glycine. The H protein shuttles the methylamine group of glycine from the P protein to the T protein. In Saccharophagus degradans (strain 2-40 / ATCC 43961 / DSM 17024), this protein is Glycine cleavage system H protein.